The sequence spans 246 residues: NH(3)-dependent NAD(+) synthetase (246 aa).

29–36 (GLSGGIDS) serves as a coordination point for ATP. Position 35 (Asp35) interacts with Mg(2+). Residue Arg110 coordinates deamido-NAD(+). Residue Thr130 participates in ATP binding. Glu135 is a binding site for Mg(2+). ATP is bound by residues Lys159 and Ser181.

Belongs to the NAD synthetase family. As to quaternary structure, homodimer.

The enzyme catalyses deamido-NAD(+) + NH4(+) + ATP = AMP + diphosphate + NAD(+) + H(+). Its pathway is cofactor biosynthesis; NAD(+) biosynthesis; NAD(+) from deamido-NAD(+) (ammonia route): step 1/1. Its function is as follows. Catalyzes the ATP-dependent amidation of deamido-NAD to form NAD. Uses ammonia as a nitrogen source. This Campylobacter jejuni subsp. jejuni serotype O:23/36 (strain 81-176) protein is NH(3)-dependent NAD(+) synthetase.